The following is a 318-amino-acid chain: NADH-ubiquinone oxidoreductase chain 1 (318 aa).

The next 8 helical transmembrane spans lie at 3–23 (FVNLLTTIIPILLAVAFLTLL), 68–88 (LILFIIAPTLALTLALMMWIP), 102–122 (ILFMLALSSLAVYAILWSGWA), 146–166 (LAIIILSVLLMNGSFTLSTLI), 171–191 (HIWLLLPSWPLAMMWFISTLA), 222–242 (LFFLAEYANIIMMNALTTILF), 253–273 (EMYTTNFMLKTLLFTTFFLWI), and 294–314 (LPLTLVMCMWHITLPIILASI).

This sequence belongs to the complex I subunit 1 family.

Its subcellular location is the mitochondrion inner membrane. The enzyme catalyses a ubiquinone + NADH + 5 H(+)(in) = a ubiquinol + NAD(+) + 4 H(+)(out). In terms of biological role, core subunit of the mitochondrial membrane respiratory chain NADH dehydrogenase (Complex I) that is believed to belong to the minimal assembly required for catalysis. Complex I functions in the transfer of electrons from NADH to the respiratory chain. The immediate electron acceptor for the enzyme is believed to be ubiquinone. The chain is NADH-ubiquinone oxidoreductase chain 1 (MT-ND1) from Nyctalus plancyi velutinus (Fine-haired noctule).